The following is a 190-amino-acid chain: MAFIAKSFYDLSAISLDGEKVDFNTFRGRAVLIENVASLUGTTTRDFTQLNELQCRFPRRLVVLGFPCHQFGHQENCQNEEILNSLKYVRPGGGYQPTFTLVQKCEVNGQNEHPVFAYLKDKLPYPHDDPFSLMTDPKLIIWSPVRRSDVAWNFEKFLIGPEGEPFRRYSRTFPTINIEPDIKRLLNVAI.

The active site involves Sec-40. Residue Sec-40 is a non-standard amino acid, selenocysteine.

The protein belongs to the glutathione peroxidase family. As to quaternary structure, homotetramer.

It is found in the cytoplasm. It localises to the cytosol. It carries out the reaction 2 glutathione + H2O2 = glutathione disulfide + 2 H2O. The catalysed reaction is a hydroperoxy polyunsaturated fatty acid + 2 glutathione = a hydroxy polyunsaturated fatty acid + glutathione disulfide + H2O. The enzyme catalyses tert-butyl hydroperoxide + 2 glutathione = tert-butanol + glutathione disulfide + H2O. It catalyses the reaction cumene hydroperoxide + 2 glutathione = 2-phenylpropan-2-ol + glutathione disulfide + H2O. It carries out the reaction (13S)-hydroperoxy-(9Z,11E)-octadecadienoate + 2 glutathione = (13S)-hydroxy-(9Z,11E)-octadecadienoate + glutathione disulfide + H2O. The catalysed reaction is (5S)-hydroperoxy-(6E,8Z,11Z,14Z)-eicosatetraenoate + 2 glutathione = (5S)-hydroxy-(6E,8Z,11Z,14Z)-eicosatetraenoate + glutathione disulfide + H2O. The enzyme catalyses (12R)-hydroperoxy-(5Z,8Z,10E,14Z)-eicosatetraenoate + 2 glutathione = (12R)-hydroxy-(5Z,8Z,10E,14Z)-eicosatetraenoate + glutathione disulfide + H2O. It catalyses the reaction (15S)-hydroperoxy-(5Z,8Z,11Z,13E)-eicosatetraenoate + 2 glutathione = (15S)-hydroxy-(5Z,8Z,11Z,13E)-eicosatetraenoate + glutathione disulfide + H2O. Catalyzes the reduction of hydroperoxides in a glutathione-dependent manner thus regulating cellular redox homeostasis. Can reduce small soluble hydroperoxides such as H2O2, cumene hydroperoxide and tert-butyl hydroperoxide, as well as several fatty acid-derived hydroperoxides. Cannot reduce phosphatidycholine hydroperoxide. The polypeptide is Glutathione peroxidase 2 (GPX2) (Callithrix jacchus (White-tufted-ear marmoset)).